A 513-amino-acid polypeptide reads, in one-letter code: uncharacterized protein (513 aa).

Positions I254–L447 constitute an HDOD domain.

This is an uncharacterized protein from Treponema pallidum (strain Nichols).